Here is a 103-residue protein sequence, read N- to C-terminus: Large ribosomal subunit protein uL24 (103 aa).

Belongs to the universal ribosomal protein uL24 family. Part of the 50S ribosomal subunit.

Its function is as follows. One of two assembly initiator proteins, it binds directly to the 5'-end of the 23S rRNA, where it nucleates assembly of the 50S subunit. One of the proteins that surrounds the polypeptide exit tunnel on the outside of the subunit. In Pediococcus pentosaceus (strain ATCC 25745 / CCUG 21536 / LMG 10740 / 183-1w), this protein is Large ribosomal subunit protein uL24.